An 88-amino-acid polypeptide reads, in one-letter code: Phosphocarrier protein HPr (88 aa).

The HPr domain occupies 1-88 (MEKRDFHVVA…ETMKKEGLSE (88 aa)). The active-site Pros-phosphohistidine intermediate is the His-15. Phosphoserine; by HPrK/P is present on Ser-46.

The protein belongs to the HPr family.

It is found in the cytoplasm. With respect to regulation, phosphorylation on Ser-46 inhibits the phosphoryl transfer from enzyme I to HPr. Functionally, general (non sugar-specific) component of the phosphoenolpyruvate-dependent sugar phosphotransferase system (sugar PTS). This major carbohydrate active-transport system catalyzes the phosphorylation of incoming sugar substrates concomitantly with their translocation across the cell membrane. The phosphoryl group from phosphoenolpyruvate (PEP) is transferred to the phosphoryl carrier protein HPr by enzyme I. Phospho-HPr then transfers it to the PTS EIIA domain. P-Ser-HPr interacts with the catabolite control protein A (CcpA), forming a complex that binds to DNA at the catabolite response elements cre, operator sites preceding a large number of catabolite-regulated genes. Thus, P-Ser-HPr is a corepressor in carbon catabolite repression (CCR), a mechanism that allows bacteria to coordinate and optimize the utilization of available carbon sources. P-Ser-HPr also plays a role in inducer exclusion, in which it probably interacts with several non-PTS permeases and inhibits their transport activity. This Latilactobacillus sakei (Lactobacillus sakei) protein is Phosphocarrier protein HPr (ptsH).